A 527-amino-acid chain; its full sequence is MEMATTFTHDVTTSGKPLLLFLILITLTYSLGIVFYRLFRHPLAKFPGPRIAAATYLYEIAFDYFGNGAYLFEIERMHHKYGPIVRLNPAELSIKDGEFYDKVYVNGNVRRTEALPSFGDGMDFNNSHGMTVDHHQHRQRRKPLEPFFSKAGVARFESNLASVVSTLVDRLRDYEGTGSVLRLDHAFAALAGDIITTMCIDSTSMTFLDDKDFSRGWYELFHTLIISMPVFMNFPWIIRLVRLIPTSILKRVDPRSQMFRDWSDMSVAEIKKSLQRKATGEMLTYQKGIIKAPTLFDHLVNSDLPTSDMSVERLASEAQVLMGAGTVTTAQSMSHLVVNVLLRPDVEKRLREEFAVLMKQLGEASLPKARELEKLPYLQACVKEGLRLSHGLMHRLPRISPDVALEFNGLIIPPGTPVGMSAYFMHMDETVYENPREFIPERWLGDVDPKMDRNYVPFSRGSRRCLAPNLAYTEISMVMAALFSPWSPAIRLQDTNASDVDPVCAFLLPLPRLDSKGVRVIVRKNKE.

Residues 15–35 (GKPLLLFLILITLTYSLGIVF) form a helical membrane-spanning segment. Asn125 carries N-linked (GlcNAc...) asparagine glycosylation. Cys465 provides a ligand contact to heme. N-linked (GlcNAc...) asparagine glycosylation occurs at Asn496.

It belongs to the cytochrome P450 family. Requires heme as cofactor.

It is found in the membrane. The protein operates within mycotoxin biosynthesis. In terms of biological role, cytochrome P450 monooxygenase; part of the gene cluster that mediates the biosynthesis of the diterpene glucoside brassicicene C. In the first step of the brassicicene C biosynthesis, the bifunctional diterpene synthase bsc8 that possesses both prenyl transferase and terpene cyclase activity, converts isopentenyl diphosphate and dimethylallyl diphosphate into geranylgeranyl diphosphate (GGDP) that is further converted into fusicocca-2,10(14)-diene, the first precursor for brassicicene C. Fusicocca-2,10(14)-diene is then substrate of cytochrome P450 monooxygenase bsc1 for hydroxylation at the C-8 position. Oxidation at C-16 position to aldehyde is then catalyzed by the cytochrome P450 monooyxygenase bsc7, yielding fusicocca-2,10(14)-diene-8-beta,16-diol. Follows the isomerization of the double bond and reduction of aldehyde to alcohol catalyzed by the short-chain dehydrogenase/reductase bsc3 to yield the diol compound fusicocca-1,10(14)-diene-8 beta,16-diol. The next step is the oxidation at the C-3 position of fusicocca-2,10(14)-diene-8-beta,16-diol catalyzed by the alpha-ketoglutarate dependent dioxygenase bsc9, to produce a triol compound. Methylation of the hydroxy group at position 16 is performed by the methyltransferase bsc6. 16-O-methylation is followed by oxidation at the C-13 position to ketone and an alkyl shift of the methyl group leads to brassicicene C. Although the probable acetyltransferase bsc4 is included in the gene cluster, no acetylation reactions are necessary for brassicicene C biosynthesis. However, the fact that brassicicene E, which is a structurally related compound having an acetoxy group at position 12, was previously isolated from another strain of A.brassicicola suggests that the ATCC 96836 strain might also produce a small amount of brassicicene E. This Alternaria brassicicola (Dark leaf spot agent) protein is Fusicoccadiene C-8 hydroxylase.